A 427-amino-acid chain; its full sequence is Glutamate-1-semialdehyde 2,1-aminomutase (427 aa).

Lys-268 carries the N6-(pyridoxal phosphate)lysine modification.

It belongs to the class-III pyridoxal-phosphate-dependent aminotransferase family. HemL subfamily. It depends on pyridoxal 5'-phosphate as a cofactor.

The protein localises to the cytoplasm. The catalysed reaction is (S)-4-amino-5-oxopentanoate = 5-aminolevulinate. It functions in the pathway porphyrin-containing compound metabolism; protoporphyrin-IX biosynthesis; 5-aminolevulinate from L-glutamyl-tRNA(Glu): step 2/2. This is Glutamate-1-semialdehyde 2,1-aminomutase from Methanococcus maripaludis (strain C5 / ATCC BAA-1333).